We begin with the raw amino-acid sequence, 121 residues long: Basic phospholipase A2 homolog textilotoxin B chain (121 aa).

Cystine bridges form between Cys-11–Cys-72, Cys-27–Cys-120, Cys-29–Cys-45, Cys-44–Cys-101, Cys-51–Cys-94, Cys-61–Cys-87, and Cys-80–Cys-92.

Belongs to the phospholipase A2 family. Group I subfamily. N49 sub-subfamily. Heterohexamer. 2 forms exist: 2 A or 2 B chains, 2 C chains and 2 covalently-linked D chains, and 1 A or 1 B, 1 C, 2 covalently-linked D chains and 2 differentially glycosylated covalently-linked D chains. Textilotoxin was originally described as pentameric. In terms of tissue distribution, expressed by the venom gland.

The protein localises to the secreted. In terms of biological role, snake venom oligomeric phospholipase A2 that has potent presynaptic neurotoxicity. Chain B is not itself neurotoxic, but it is essential for the neurotoxicity of textilotoxin. Subunit B possesses a very low phospholipase activity. This chain is Basic phospholipase A2 homolog textilotoxin B chain, found in Pseudonaja textilis (Eastern brown snake).